The sequence spans 174 residues: Large ribosomal subunit protein uL18 (174 aa).

This sequence belongs to the universal ribosomal protein uL18 family. As to quaternary structure, part of the 50S ribosomal subunit. Contacts the 5S and 23S rRNAs.

This is one of the proteins that bind and probably mediate the attachment of the 5S RNA into the large ribosomal subunit, where it forms part of the central protuberance. In Methanosarcina acetivorans (strain ATCC 35395 / DSM 2834 / JCM 12185 / C2A), this protein is Large ribosomal subunit protein uL18.